A 361-amino-acid polypeptide reads, in one-letter code: Mitochondrial import receptor subunit TOM40 homolog (361 aa).

A disordered region spans residues 1–73; it reads MGNVLAASSP…GAAAASEDGS (73 aa). A compositionally biased stretch (pro residues) spans 11–36; that stretch reads PAGPPPPPTPSLVGLPPPPPSPPGFT. The segment covering 40–50 has biased composition (gly residues); that stretch reads LGGGLGTGSST. Low complexity predominate over residues 51–69; sequence GRGSERTPGAAASGAAAAS.

This sequence belongs to the Tom40 family. Forms part of the preprotein translocase complex of the outer mitochondrial membrane (TOM complex) which consists of at least 7 different proteins (TOMM5, TOMM6, TOMM7, TOMM20, TOMM22, TOMM40 and TOMM70). Interacts with mitochondrial targeting sequences. Interacts with TIMM29; linking the TIM22 complex to the TOM complex. Forms a complex with BCAP31 (via C-terminus) which mediates the translocation of components of the mitochondrial membrane respiratory chain NADH dehydrogenase (Complex I) from the cytosol to the mitochondria. Interacts (via N-terminus) with CYP1A1 (via mitochondrial targeting signal); this interaction is required for CYP1A1 translocation across the mitochondrial outer membrane.

It localises to the mitochondrion outer membrane. Channel-forming protein essential for import of protein precursors into mitochondria. Plays a role in the assembly of the mitochondrial membrane respiratory chain NADH dehydrogenase (Complex I) by forming a complex with BCAP31 and mediating the translocation of Complex I components from the cytosol to the mitochondria. The polypeptide is Mitochondrial import receptor subunit TOM40 homolog (Tomm40) (Mus musculus (Mouse)).